The primary structure comprises 550 residues: Rab GTPase-activating protein 22 (550 aa).

The tract at residues 1–49 is disordered; it reads MKALRRSYTSTSSGNSSSSSSLPSSSSSSLPSSSSSSPPSSNSNSYSNS. Residues 7-49 are compositionally biased toward low complexity; the sequence is SYTSTSSGNSSSSSSLPSSSSSSLPSSSSSSPPSSNSNSYSNS. Residues 126 to 460 enclose the Rab-GAP TBC domain; it reads GVDPSIRAEV…CLWEVMWADQ (335 aa).

Interacts with AGT1 in peroxisome under biotic stress conditions. In terms of tissue distribution, expressed in root meristems, vascular tissues, guard cells, trichomes, styles and receptacles.

The protein resides in the nucleus. The protein localises to the peroxisome. In terms of biological role, involved in defense response against fungal and bacterial pathogens. Acts as a negative regulator of jasmonate (JA) responses during infection by the soil-born fungal pathogen Verticillium longisporum. Involved in abscisic acid-dependent stomata closure in response to infection by V.longisporum and Pseudomonas syringae. May be a downstream component of brassinosteroid-mediated signaling. This is Rab GTPase-activating protein 22 from Arabidopsis thaliana (Mouse-ear cress).